Reading from the N-terminus, the 192-residue chain is Large ribosomal subunit protein uL24c (192 aa).

The N-terminal 47 residues, 1-47 (MAAMAALQSSFTSLSLSSNSFLGQRLFPSPTTLQVKTEGHSPCLIVM), are a transit peptide targeting the chloroplast.

In terms of assembly, component of the chloroplast large ribosomal subunit (LSU). Mature 70S chloroplast ribosomes of higher plants consist of a small (30S) and a large (50S) subunit. The 30S small subunit contains 1 molecule of ribosomal RNA (16S rRNA) and 24 different proteins. The 50S large subunit contains 3 rRNA molecules (23S, 5S and 4.5S rRNA) and 33 different proteins.

Its subcellular location is the plastid. It is found in the chloroplast. Component of the chloroplast ribosome (chloro-ribosome), a dedicated translation machinery responsible for the synthesis of chloroplast genome-encoded proteins, including proteins of the transcription and translation machinery and components of the photosynthetic apparatus. In Spinacia oleracea (Spinach), this protein is Large ribosomal subunit protein uL24c (RPL24).